The chain runs to 429 residues: MPAIVIVGAQWGDEGKGKATDLLGGRVDYVVKPNGGNNAGHTVVVGGEKYELKLLPAGILSPNAVPIIGNGCVVNLEALFQEIDGLQARGADTSKLRVSANAHLVAPYHQVLDKVTERFLGKRAIGTTGRGIGPAYMDKVARLGIRVQDVFDESILRQKVEGSLHQKNEVLVKIYNRRSVVVDEIVEYFLSFAERLRPLVIDSTLVLNTALDEGKVVLMEGGQATFLDVDHGTYPFVTSSNPTAGGASVGSGIGPTRISRSIGIIKAYTTRVGAGPFPTELFDEMGVYLQKTGGEFGVNTGRPRRCGWYDAVLARHASRVNGFTDYFVTKLDVLTGIEQIPVCVAYDVDGVRHDEMPMTQTEFHHAKPIFEYFDGWTEDITGARTLADLPENARNYVLALEKLSGTRFSAIGVGPDRDQTIVVNDLIND.

GTP contacts are provided by residues 12–18 (GDEGKGK) and 40–42 (GHT). D13 acts as the Proton acceptor in catalysis. D13 and G40 together coordinate Mg(2+). Residues 13-16 (DEGK), 38-41 (NAGH), T128, R142, Q223, T238, and R302 each bind IMP. H41 (proton donor) is an active-site residue. Position 298–304 (298–304 (VNTGRPR)) interacts with substrate. Residues R304, 330 to 332 (KLD), and 412 to 414 (GVG) contribute to the GTP site.

Belongs to the adenylosuccinate synthetase family. As to quaternary structure, homodimer. Mg(2+) serves as cofactor.

Its subcellular location is the cytoplasm. It catalyses the reaction IMP + L-aspartate + GTP = N(6)-(1,2-dicarboxyethyl)-AMP + GDP + phosphate + 2 H(+). The protein operates within purine metabolism; AMP biosynthesis via de novo pathway; AMP from IMP: step 1/2. Plays an important role in the de novo pathway of purine nucleotide biosynthesis. Catalyzes the first committed step in the biosynthesis of AMP from IMP. This Pseudarthrobacter chlorophenolicus (strain ATCC 700700 / DSM 12829 / CIP 107037 / JCM 12360 / KCTC 9906 / NCIMB 13794 / A6) (Arthrobacter chlorophenolicus) protein is Adenylosuccinate synthetase.